The sequence spans 306 residues: MSEVLPAGLATTVLVPASSANLGPGFDSLGIALSLYDEIEVNTTESGLKVAVEGQGAGEVPLDGSHLVVRAIERGLAAGGAAAPGLIVQCHNKIPHSRGLGSSAAAAVAGLGVANGLLAKAGRAVLSDDVLVQLASEFEGHPDNAAASVLGGAVVSWSETSGATPIYAATRLDVHPDIKIVAAIPEEQSSTAHTRVLLPQAVTHVDARFNISRVALLTVALTARPDLLMTATEDRLHQPQRASAMPASADVLAYLRSQGVAAVLSGAGPAVLALTTVDLPDSAVKYAEDQGFSLVAMAVSAGVSVR.

95-105 (PHSRGLGSSAA) lines the ATP pocket.

Belongs to the GHMP kinase family. Homoserine kinase subfamily.

It localises to the cytoplasm. It carries out the reaction L-homoserine + ATP = O-phospho-L-homoserine + ADP + H(+). Its pathway is amino-acid biosynthesis; L-threonine biosynthesis; L-threonine from L-aspartate: step 4/5. Catalyzes the ATP-dependent phosphorylation of L-homoserine to L-homoserine phosphate. The protein is Homoserine kinase of Mycobacteroides abscessus (strain ATCC 19977 / DSM 44196 / CCUG 20993 / CIP 104536 / JCM 13569 / NCTC 13031 / TMC 1543 / L948) (Mycobacterium abscessus).